Reading from the N-terminus, the 251-residue chain is Ribosomal RNA small subunit methyltransferase J (251 aa).

S-adenosyl-L-methionine is bound by residues 100-101 (RD), 116-117 (ER), and aspartate 170.

Belongs to the methyltransferase superfamily. RsmJ family.

Its subcellular location is the cytoplasm. It carries out the reaction guanosine(1516) in 16S rRNA + S-adenosyl-L-methionine = N(2)-methylguanosine(1516) in 16S rRNA + S-adenosyl-L-homocysteine + H(+). Specifically methylates the guanosine in position 1516 of 16S rRNA. This chain is Ribosomal RNA small subunit methyltransferase J, found in Actinobacillus pleuropneumoniae serotype 3 (strain JL03).